The chain runs to 260 residues: DNA repair protein RecO (260 aa).

This sequence belongs to the RecO family.

Functionally, involved in DNA repair and RecF pathway recombination. This is DNA repair protein RecO from Ligilactobacillus salivarius (strain UCC118) (Lactobacillus salivarius).